The primary structure comprises 294 residues: N-acetylmuramic acid 6-phosphate etherase (294 aa).

Positions 56-219 constitute an SIS domain; it reads TSYSLRNGGR…STLSMVSVGK (164 aa). E84 serves as the catalytic Proton donor. E115 is an active-site residue.

It belongs to the GCKR-like family. MurNAc-6-P etherase subfamily. As to quaternary structure, homodimer.

It carries out the reaction N-acetyl-D-muramate 6-phosphate + H2O = N-acetyl-D-glucosamine 6-phosphate + (R)-lactate. The protein operates within amino-sugar metabolism; 1,6-anhydro-N-acetylmuramate degradation. It functions in the pathway amino-sugar metabolism; N-acetylmuramate degradation. Its pathway is cell wall biogenesis; peptidoglycan recycling. Functionally, specifically catalyzes the cleavage of the D-lactyl ether substituent of MurNAc 6-phosphate, producing GlcNAc 6-phosphate and D-lactate. Together with AnmK, is also required for the utilization of anhydro-N-acetylmuramic acid (anhMurNAc) either imported from the medium or derived from its own cell wall murein, and thus plays a role in cell wall recycling. This chain is N-acetylmuramic acid 6-phosphate etherase, found in Francisella tularensis subsp. holarctica (strain LVS).